Reading from the N-terminus, the 525-residue chain is Glutamate--cysteine ligase (525 aa).

Belongs to the glutamate--cysteine ligase type 1 family. Type 1 subfamily.

It catalyses the reaction L-cysteine + L-glutamate + ATP = gamma-L-glutamyl-L-cysteine + ADP + phosphate + H(+). The protein operates within sulfur metabolism; glutathione biosynthesis; glutathione from L-cysteine and L-glutamate: step 1/2. The chain is Glutamate--cysteine ligase from Vibrio vulnificus (strain CMCP6).